The following is a 399-amino-acid chain: Acetate kinase (399 aa).

Asn-7 is a Mg(2+) binding site. Lys-14 is an ATP binding site. Arg-89 contributes to the substrate binding site. Catalysis depends on Asp-146, which acts as the Proton donor/acceptor. ATP is bound by residues His-206–Gly-210, Asp-280–Arg-282, and Gly-328–Asn-332. Glu-382 provides a ligand contact to Mg(2+).

This sequence belongs to the acetokinase family. As to quaternary structure, homodimer. The cofactor is Mg(2+). It depends on Mn(2+) as a cofactor.

The protein localises to the cytoplasm. It carries out the reaction acetate + ATP = acetyl phosphate + ADP. Its pathway is metabolic intermediate biosynthesis; acetyl-CoA biosynthesis; acetyl-CoA from acetate: step 1/2. Catalyzes the formation of acetyl phosphate from acetate and ATP. Can also catalyze the reverse reaction. The sequence is that of Acetate kinase from Campylobacter fetus subsp. fetus (strain 82-40).